Reading from the N-terminus, the 63-residue chain is MRCLPVFVILLLLIASTPSIDARPKTKDDMPLASFNDNAKRILQILSRKPCCSIHDNSCCGLG.

Positions 1–22 (MRCLPVFVILLLLIASTPSIDA) are cleaved as a signal peptide. Residues 23–47 (RPKTKDDMPLASFNDNAKRILQILS) constitute a propeptide that is removed on maturation. The residue at position 60 (cysteine 60) is a Cysteine amide. Residues 62-63 (LG) constitute a propeptide that is removed on maturation.

It belongs to the conotoxin T superfamily. Post-translationally, contains 2 disulfide bonds that can be either 'C1-C3, C2-C4' or 'C1-C4, C2-C3', since these disulfide connectivities have been observed for conotoxins with cysteine framework V (for examples, see AC P0DQQ7 and AC P81755). In terms of tissue distribution, expressed by the venom duct.

The protein localises to the secreted. This is Conotoxin LeDr243 from Conus litteratus (Lettered cone).